Here is a 206-residue protein sequence, read N- to C-terminus: Large ribosomal subunit protein uL4 (206 aa).

It belongs to the universal ribosomal protein uL4 family. Part of the 50S ribosomal subunit.

Its function is as follows. One of the primary rRNA binding proteins, this protein initially binds near the 5'-end of the 23S rRNA. It is important during the early stages of 50S assembly. It makes multiple contacts with different domains of the 23S rRNA in the assembled 50S subunit and ribosome. Functionally, forms part of the polypeptide exit tunnel. This Bradyrhizobium diazoefficiens (strain JCM 10833 / BCRC 13528 / IAM 13628 / NBRC 14792 / USDA 110) protein is Large ribosomal subunit protein uL4.